Reading from the N-terminus, the 552-residue chain is HTH-type transcriptional regulator SgrR (552 aa).

The region spanning methionine 1 to arginine 116 is the HTH marR-type domain. Positions leucine 26–aspartate 49 form a DNA-binding region, H-T-H motif. The segment at glutamate 163 to tryptophan 492 is solute-binding.

Its function is as follows. Activates the small RNA gene sgrS under glucose-phosphate stress conditions as well as yfdZ. Represses its own transcription under both stress and non-stress conditions. Might act as a sensor of the intracellular accumulation of phosphoglucose by binding these molecules in its C-terminal solute-binding domain. In Escherichia coli O157:H7, this protein is HTH-type transcriptional regulator SgrR.